The primary structure comprises 145 residues: uncharacterized protein (145 aa).

The protein belongs to the asfivirus K145R family.

The protein resides in the virion. This is an uncharacterized protein from Ornithodoros (relapsing fever ticks).